The sequence spans 942 residues: Glutamyl aminopeptidase (942 aa).

Residues 1 to 14 (MSTDSKRYCIKTKH) are Cytoplasmic-facing. A helical; Signal-anchor for type II membrane protein membrane pass occupies residues 15–35 (VAIICAAVVAVGLIVGLSVGL). The Extracellular portion of the chain corresponds to 36–942 (TRSCDSKDGG…RDTIRDWFFN (907 aa)). The disordered stretch occupies residues 40–74 (DSKDGGQGTTQSPSHLPPTSSPPQDQGVCPASEDE). N-linked (GlcNAc...) asparagine glycans are attached at residues Asn110, Asn114, and Asn187. Position 213 (Glu213) interacts with substrate. An N-linked (GlcNAc...) asparagine glycan is attached at Asn314. 347-351 (GAMEN) is a substrate binding site. Asn367 carries an N-linked (GlcNAc...) asparagine glycan. Residue His383 participates in Zn(2+) binding. Glu384 serves as the catalytic Proton acceptor. Zn(2+)-binding residues include His387 and Glu406. Asn557, Asn579, Asn587, Asn597, Asn632, Asn668, Asn753, Asn786, and Asn791 each carry an N-linked (GlcNAc...) asparagine glycan. Arg877 contacts substrate.

It belongs to the peptidase M1 family. Homodimer; disulfide-linked. Zn(2+) is required as a cofactor.

The protein resides in the cell membrane. It catalyses the reaction Release of N-terminal glutamate (and to a lesser extent aspartate) from a peptide.. Substrate specificity is modulated by calcium which enhances the enzymatic activity for cleavage of acidic residues while reducing its activity with basic residues. Inhibited by aminopeptidase inhibitors amastatin and bestatin. Regulates central hypertension through its calcium-modulated preference to cleave N-terminal acidic residues from peptides such as angiotensin II. The sequence is that of Glutamyl aminopeptidase (ENPEP) from Sus scrofa (Pig).